Consider the following 314-residue polypeptide: Probable 5-dehydro-4-deoxyglucarate dehydratase (314 aa).

It belongs to the DapA family.

It catalyses the reaction 5-dehydro-4-deoxy-D-glucarate + H(+) = 2,5-dioxopentanoate + CO2 + H2O. The protein operates within carbohydrate acid metabolism; D-glucarate degradation; 2,5-dioxopentanoate from D-glucarate: step 2/2. The polypeptide is Probable 5-dehydro-4-deoxyglucarate dehydratase (Bradyrhizobium sp. (strain ORS 278)).